We begin with the raw amino-acid sequence, 423 residues long: MANPRVFPLSCVVQQYAWGKVGSKSEVACLLACSDPLTQISEDKPYAELWMGAHPRGDAKILDNRISQKTLGQWIAENQNSLGQKVKDTFNGKLPFLFKVLSVETALSIQAHPNKELAEKLHLQAPEHYPDANHKPEMAIALTPFQGLCGFRPVEEIVTFLKKVPEFQSLIGEDATAQLKKSMNEGSGAMASALKNCFSHLMKSEKKVVVEQLNLLVKRISQQISNGNSMDDICGELLLQLHQQYPGDIGCFAIYLLNLITLKPGEAMFLEANVPHAYLKGDCVECMACSDNTVRAGLTPKFIDVSTLCEMLDYTPSPSKDRLFAPTLSQDDPYLSIYDPPVPDFTVMKIEVPGSVTEYKVLTLDSASILLLVQGTVTAIIPSVQGEIPLSRGGVLFIGANETVLLKLTVPKNLLIFRACCLL.

A2 carries the post-translational modification N-acetylalanine. Residues S102 and S108 each carry the phosphoserine modification. Zn(2+) contacts are provided by Q110, H112, E137, and H276. Residue R295 is part of the active site.

It belongs to the mannose-6-phosphate isomerase type 1 family. Requires Zn(2+) as cofactor.

The protein localises to the cytoplasm. The catalysed reaction is D-mannose 6-phosphate = D-fructose 6-phosphate. The protein operates within nucleotide-sugar biosynthesis; GDP-alpha-D-mannose biosynthesis; alpha-D-mannose 1-phosphate from D-fructose 6-phosphate: step 1/2. Functionally, isomerase that catalyzes the interconversion of fructose-6-P and mannose-6-P and has a critical role in the supply of D-mannose derivatives required for many eukaryotic glycosylation reactions. In Rattus norvegicus (Rat), this protein is Mannose-6-phosphate isomerase.